We begin with the raw amino-acid sequence, 150 residues long: Anthranilate synthase component 1 (150 aa).

Ser-40 is an L-tryptophan binding site. Arg-119 provides a ligand contact to chorismate.

The protein belongs to the anthranilate synthase component I family. In terms of assembly, heterotetramer consisting of two non-identical subunits: a beta subunit (TrpG) and a large alpha subunit (TrpE). Mg(2+) is required as a cofactor.

It carries out the reaction chorismate + L-glutamine = anthranilate + pyruvate + L-glutamate + H(+). It functions in the pathway amino-acid biosynthesis; L-tryptophan biosynthesis; L-tryptophan from chorismate: step 1/5. With respect to regulation, feedback inhibited by tryptophan. Its function is as follows. Part of a heterotetrameric complex that catalyzes the two-step biosynthesis of anthranilate, an intermediate in the biosynthesis of L-tryptophan. In the first step, the glutamine-binding beta subunit (TrpG) of anthranilate synthase (AS) provides the glutamine amidotransferase activity which generates ammonia as a substrate that, along with chorismate, is used in the second step, catalyzed by the large alpha subunit of AS (TrpE) to produce anthranilate. In the absence of TrpG, TrpE can synthesize anthranilate directly from chorismate and high concentrations of ammonia. The sequence is that of Anthranilate synthase component 1 (trpE) from Citrobacter freundii.